The chain runs to 1021 residues: Sodium/potassium-transporting ATPase subunit alpha-1 (1021 aa).

Residues 1–5 (MGKGG) constitute a propeptide that is removed on maturation. A compositionally biased stretch (basic and acidic residues) spans 1–11 (MGKGGGRDKYE). Positions 1-37 (MGKGGGRDKYEPAAISEHGNKKKAKKERDMDELKKEV) are disordered. Residues 6 to 85 (GRDKYEPAAI…NALTPPPTTP (80 aa)) lie on the Cytoplasmic side of the membrane. Lys9 is subject to N6-acetyllysine. Tyr10 is subject to Phosphotyrosine. A Phosphoserine; by PKC modification is found at Ser16. Lys21 carries the N6-acetyllysine modification. Residues 26-37 (KERDMDELKKEV) are compositionally biased toward basic and acidic residues. Ser38 and Ser45 each carry phosphoserine. Positions 80–82 (PPP) are phosphoinositide-3 kinase binding. A helical membrane pass occupies residues 86 to 106 (EWVKFCRQLFGGFSMLLWIGA). Topologically, residues 107–129 (ILCFLAYGIQAATEEEPQNDNLY) are extracellular. Residues 130–150 (LGVVLSAVVIITGCFSYYQEA) traverse the membrane as a helical segment. Residues 151-286 (KSSKIMESFK…GGQTPIAAEI (136 aa)) are Cytoplasmic-facing. The disordered stretch occupies residues 214–233 (SSLTGESEPQTRSPDFTNEN). Ser226 is subject to Phosphoserine. Position 258 is a phosphotyrosine (Tyr258). Residues 287-306 (EHFIHIITGVAVFLGVTFFI) traverse the membrane as a helical segment. Residues 307-318 (LSLILEYTWLEA) are Extracellular-facing. Residues 319 to 336 (VIFLIGIIVANVPEGLLA) traverse the membrane as a helical segment. Residues 337–770 (TVTVCLTLTA…EEGRLIFDNL (434 aa)) lie on the Cytoplasmic side of the membrane. Asp374 (4-aspartylphosphate intermediate) is an active-site residue. Ser450 and Ser482 each carry phosphoserine. Lys485 contributes to the ATP binding site. A Phosphotyrosine modification is found at Tyr540. The mediates interaction with SCN7A stretch occupies residues 594 to 715 (RAAVPDAVGK…QGAIVAVTGD (122 aa)). Lys659 carries the post-translational modification N6-succinyllysine. At Ser666 the chain carries Phosphoserine. 2 residues coordinate Mg(2+): Asp715 and Asp719. The chain crosses the membrane as a helical span at residues 771-790 (KKSIAYTLTSNIPEITPFLI). Topologically, residues 791-800 (FIIANIPLPL) are extracellular. The helical transmembrane segment at 801-821 (GTVTILCIDLGTDMVPAISLA) threads the bilayer. Over 822–841 (YEQAESDIMKRQPRNPQTDK) the chain is Cytoplasmic. A helical transmembrane segment spans residues 842 to 864 (LVNERLISMAYGQIGMIQALGGF). Topologically, residues 865–916 (FTYFVILAENGFLPIHLLGLRVDWDDRWVNDVEDSYGQQWTYEQRKIVEFTC) are extracellular. The chain crosses the membrane as a helical span at residues 917 to 936 (HTAFFVSIVVVQWADLVICK). Over 937 to 949 (TRRNSVFQQGMKN) the chain is Cytoplasmic. Phosphoserine; by PKA is present on Ser941. The chain crosses the membrane as a helical span at residues 950–968 (KILIFGLFEETALAAFLSY). The Extracellular segment spans residues 969 to 983 (CPGMGVALRMYPLKP). A helical membrane pass occupies residues 984 to 1004 (TWWFCAFPYSLLIFVYDEVRK). Over 1005–1021 (LIIRRRPGGWVEKETYY) the chain is Cytoplasmic.

Belongs to the cation transport ATPase (P-type) (TC 3.A.3) family. Type IIC subfamily. In terms of assembly, the sodium/potassium-transporting ATPase is composed of a catalytic alpha subunit, an auxiliary non-catalytic beta subunit and an additional regulatory subunit. Interacts with regulatory subunit FXYD1. Interacts with regulatory subunit FXYD3. Interacts with SIK1. Interacts with SLC35G1 and STIM1. Interacts with CLN3; this interaction regulates the sodium/potassium-transporting ATPase complex localization at the plasma membrane. Interacts with SCN7A; activates ATP1A1 P-type sodium:potassium-exchanging transporter activity which indirectly signals to nearby neurons to regulate sodium homeostasis. Post-translationally, phosphorylation on Tyr-10 modulates pumping activity. Phosphorylation of Ser-941 by PKA modulates the response of ATP1A1 to PKC. Dephosphorylation by protein phosphatase 2A (PP2A) following increases in intracellular sodium, leading to increase catalytic activity.

It localises to the cell membrane. It is found in the basolateral cell membrane. The protein resides in the sarcolemma. The protein localises to the cell projection. Its subcellular location is the axon. It localises to the melanosome. It carries out the reaction K(+)(out) + Na(+)(in) + ATP + H2O = K(+)(in) + Na(+)(out) + ADP + phosphate + H(+). Functionally, this is the catalytic component of the active enzyme, which catalyzes the hydrolysis of ATP coupled with the exchange of sodium and potassium ions across the plasma membrane. This action creates the electrochemical gradient of sodium and potassium ions, providing the energy for active transport of various nutrients. Could also be part of an osmosensory signaling pathway that senses body-fluid sodium levels and controls salt intake behavior as well as voluntary water intake to regulate sodium homeostasis. In Equus caballus (Horse), this protein is Sodium/potassium-transporting ATPase subunit alpha-1 (ATP1A1).